The primary structure comprises 794 residues: Protein smoothened (794 aa).

The signal sequence occupies residues 1-15 (GPCWLWALALGLALG). Over 16 to 201 (PRRCPAAPLN…FTETEHREMH (186 aa)) the chain is Extracellular. A glycan (N-linked (GlcNAc...) asparagine) is linked at N25. 5 disulfides stabilise this stretch: C34/C148, C40/C104, C48/C97, C88/C124, and C117/C139. The region spanning 35-151 (RRPAACERLR…DRFPEGCPNE (117 aa)) is the FZ domain. D65 is a cholesterol binding site. N-linked (GlcNAc...) asparagine glycosylation is present at N158. Disulfide bonds link C163-C183 and C187-C264. The helical transmembrane segment at 202–222 (VYIAFSSVTISCTFFTLATFV) threads the bilayer. Residues 223–231 (ADWRNSNRY) are Cytoplasmic-facing. The helical transmembrane segment at 232–252 (PAVILFYVNACFFVGSIGCVA) threads the bilayer. Residues 253–283 (QFMDGARDEIVCRADGTMRLGEPTSNETLSC) are Extracellular-facing. N278 is a glycosylation site (N-linked (GlcNAc...) asparagine). Cysteines 283 and 359 form a disulfide. The helical transmembrane segment at 284 to 304 (VIIFVIVYYSLMSGVIWFVML) threads the bilayer. At 305–327 (TYAWHTSFKALGTTYQPLLGKTS) the chain is on the cytoplasmic side. Residues 328–348 (YFHLITWSIPFVLTVAILAVA) traverse the membrane as a helical segment. The Extracellular segment spans residues 349–371 (QVDGDSVSGICFVGYKNYRYRAG). A cholesterol-binding site is contributed by Y363. Residues 372–392 (FVLAPIGLVLIVGGYFLIRGV) form a helical membrane-spanning segment. The Cytoplasmic segment spans residues 393–420 (MTLFSIKSNHPGLLSEKAASKINETMLR). A helical transmembrane segment spans residues 421–440 (LGIFGFLAFGFVFITFGCHF). The Extracellular portion of the chain corresponds to 441–493 (YDFFNQAEWERSFREYVLCEANVTIATQTNKPIPECEIKNRPSLLVEKINLFA). A disulfide bond links C459 and C476. An N-linked (GlcNAc...) asparagine glycan is attached at N462. Residues 494–514 (MFGTGISMSTWVWTKATLLIW) form a helical membrane-spanning segment. At 515 to 794 (KRTWCRLTGQ…AELLDADLDF (280 aa)) the chain is on the cytoplasmic side. Disordered stretches follow at residues 634–655 (LQKR…CPER) and 723–773 (PFCP…RAGL). The span at 637 to 647 (RSRKKKRRKKK) shows a compositional bias: basic residues.

Belongs to the G-protein coupled receptor Fz/Smo family. Homodimer.

It is found in the cell membrane. Its subcellular location is the cell projection. It localises to the cilium. G protein-coupled receptor which associates with the patched protein (PTCH) to transduce hedgehog protein signaling. Binding of sonic hedgehog (SHH) to its receptor patched prevents inhibition of smoothened (SMO) by patched. When active, SMO binds to and sequesters protein kinase A catalytic subunit PRKACA at the cell membrane, preventing PRKACA-mediated phosphorylation of GLI transcription factors which releases the GLI proteins from PRKACA-mediated inhibition and allows for transcriptional activation of hedgehog pathway target genes. The chain is Protein smoothened (SMO) from Gallus gallus (Chicken).